A 266-amino-acid chain; its full sequence is Zinc transporter ZupT (266 aa).

The next 8 membrane-spanning stretches (helical) occupy residues 8 to 28 (LALT…ALMV), 35 to 55 (FLTF…FVEI), 70 to 90 (HAAG…IWLI), 123 to 143 (GIFT…AVFF), 152 to 172 (GVVI…AVAV), 185 to 205 (FSYS…GYAL), 209 to 229 (FLSP…MVYI), and 246 to 266 (IAIS…LMLA). 2 residues coordinate Fe(2+): Asn134 and Glu137. Zn(2+) is bound by residues Glu137 and His162. Residues Asn163, Glu166, and Glu195 each coordinate Fe(2+). Glu166 contacts Zn(2+).

The protein belongs to the ZIP transporter (TC 2.A.5) family. ZupT subfamily.

It is found in the cell inner membrane. The enzyme catalyses Zn(2+)(in) = Zn(2+)(out). Mediates zinc uptake. May also transport other divalent cations. This chain is Zinc transporter ZupT, found in Chlorobium limicola (strain DSM 245 / NBRC 103803 / 6330).